The sequence spans 586 residues: Adenine deaminase (586 aa).

This sequence belongs to the metallo-dependent hydrolases superfamily. Adenine deaminase family. Mn(2+) serves as cofactor.

It carries out the reaction adenine + H2O + H(+) = hypoxanthine + NH4(+). In Bdellovibrio bacteriovorus (strain ATCC 15356 / DSM 50701 / NCIMB 9529 / HD100), this protein is Adenine deaminase.